The sequence spans 148 residues: MTRKQRRLYFVLLGMAALGGAVALVLTAISDSLVYFYSPTDIVSQRIPEGRRMRIGGLVENDSVVKDGKTVTFKVTDVTNAVPVVYTGVLPDLFREGQGVVVEGRMEAGGHFKASEVLAKHDENYMPKEVAEALKKSGQWNDGKQPKQ.

Residues 1 to 7 (MTRKQRR) are Cytoplasmic-facing. The helical; Signal-anchor for type II membrane protein transmembrane segment at 8 to 28 (LYFVLLGMAALGGAVALVLTA) threads the bilayer. Over 29 to 148 (ISDSLVYFYS…QWNDGKQPKQ (120 aa)) the chain is Periplasmic. Heme is bound by residues H121 and Y125.

It belongs to the CcmE/CycJ family.

It is found in the cell inner membrane. Heme chaperone required for the biogenesis of c-type cytochromes. Transiently binds heme delivered by CcmC and transfers the heme to apo-cytochromes in a process facilitated by CcmF and CcmH. This chain is Cytochrome c-type biogenesis protein CcmE, found in Paramagnetospirillum magneticum (strain ATCC 700264 / AMB-1) (Magnetospirillum magneticum).